Reading from the N-terminus, the 415-residue chain is Putative F-box protein At5g40050 (415 aa).

Residues isoleucine 13 to serine 59 enclose the F-box domain.

This is Putative F-box protein At5g40050 from Arabidopsis thaliana (Mouse-ear cress).